A 658-amino-acid chain; its full sequence is Threonine--tRNA ligase (658 aa).

The 61-residue stretch at 1–61 folds into the TGS domain; the sequence is MIELVFPDGS…EKGGAFKILT (61 aa). The catalytic stretch occupies residues 243-535; sequence DHRKLGRQMD…LIENYAGAFP (293 aa). Residues C335, H386, and H512 each coordinate Zn(2+).

The protein belongs to the class-II aminoacyl-tRNA synthetase family. In terms of assembly, homodimer. The cofactor is Zn(2+).

It localises to the cytoplasm. The catalysed reaction is tRNA(Thr) + L-threonine + ATP = L-threonyl-tRNA(Thr) + AMP + diphosphate + H(+). In terms of biological role, catalyzes the attachment of threonine to tRNA(Thr) in a two-step reaction: L-threonine is first activated by ATP to form Thr-AMP and then transferred to the acceptor end of tRNA(Thr). Also edits incorrectly charged L-seryl-tRNA(Thr). This chain is Threonine--tRNA ligase, found in Phenylobacterium zucineum (strain HLK1).